A 373-amino-acid chain; its full sequence is 3-isopropylmalate dehydrogenase (373 aa).

82 to 93 contributes to the NAD(+) binding site; it reads GPKWGTGALRPE. Substrate contacts are provided by R100, R110, R139, and D231. Mg(2+)-binding residues include D231, D256, and D260. Residue 295–306 participates in NAD(+) binding; that stretch reads GSAPDLPANKVN.

The protein belongs to the isocitrate and isopropylmalate dehydrogenases family. Homodimer. It depends on Mg(2+) as a cofactor. Mn(2+) serves as cofactor.

The protein localises to the cytoplasm. The catalysed reaction is (2R,3S)-3-isopropylmalate + NAD(+) = 4-methyl-2-oxopentanoate + CO2 + NADH. It functions in the pathway amino-acid biosynthesis; L-leucine biosynthesis; L-leucine from 3-methyl-2-oxobutanoate: step 3/4. In terms of biological role, catalyzes the oxidation of 3-carboxy-2-hydroxy-4-methylpentanoate (3-isopropylmalate) to 3-carboxy-4-methyl-2-oxopentanoate. The product decarboxylates to 4-methyl-2 oxopentanoate. This Candida maltosa (Yeast) protein is 3-isopropylmalate dehydrogenase (LEU2).